The chain runs to 642 residues: Tigger transposable element derived 5 (642 aa).

Residues 1–54 (MYPASPPAGPALHPVPHRARLPQPRCLAEPPRSPAPGPGSTARPPPPPAPGPRP) are disordered. Over residues 31-53 (PRSPAPGPGSTARPPPPPAPGPR) the composition is skewed to pro residues. The region spanning 57–108 (AVKMTFRKAYSIKDKLQAIERVKGGERQASVCRDFGVPGGTLRGWLKDEPKL) is the HTH psq-type domain. DNA-binding regions (H-T-H motif) lie at residues 84 to 104 (QASV…WLKD) and 155 to 188 (PVIQ…WQKR). An HTH CENPB-type domain is found at 122–195 (QRKKMRLANE…QKRHGISSQR (74 aa)). The disordered stretch occupies residues 202–238 (SPVAGPAPVKEEPAQSPGAVLVPDGAPATLPHSEGGY). Residues 240 to 365 (DEQIYNANVT…CLQQKAVLLV (126 aa)) enclose the DDE-1 domain. 2 disordered regions span residues 375-400 (TSMP…SPEE) and 548-581 (GCRE…TEQG).

This sequence belongs to the tigger transposable element derived protein family.

The protein localises to the nucleus. This Mus musculus (Mouse) protein is Tigger transposable element derived 5 (Tigd5).